Consider the following 210-residue polypeptide: Frataxin, mitochondrial (210 aa).

Residues Met-1–Gly-41 constitute a mitochondrion transit peptide.

The protein belongs to the frataxin family. As to quaternary structure, component of the mitochondrial core iron-sulfur cluster (ISC) complex composed of NFS1, LYRM4, NDUFAB1, ISCU, FXN, and FDX2; this complex is a heterohexamer containing two copies of each monomer. Homodimer. Monomer (probable predominant form). Oligomer. Monomers and polymeric aggregates of &gt;1 MDa have been isolated from mitochondria. A small fraction of heterologous overexpressed recombinant frataxin forms high-molecular weight aggregates that incorporate iron. Interacts with LYRM4. Interacts (via ferrous form) with ISCU; the interaction is possible when both are bound to the dimeric form of the cysteine desulfurase complex (NFS1:LYRM4) and the interaction enhances FXN interaction to the dimeric form of the cysteine desulfurase complex (NFS1:LYRM4). Interacts with FECH; one iron-bound FXN monomer seems to interact with a FECH homodimer. Interacts with SDHA and SDHB. Interacts with ACO2; the interaction is dependent on citrate. Interacts with HSPA9. Interacts with ACO1. Interacts with ISCU (cytoplasmic form). Post-translationally, processed in two steps by mitochondrial processing peptidase (MPP). MPP first cleaves the precursor to intermediate form and subsequently converts the intermediate to yield frataxin mature form (frataxin(81-210)) which is the predominant form. The additional forms, frataxin(56-210) and frataxin(78-210), seem to be produced when the normal maturation process is impaired; their physiological relevance is unsure.

Its subcellular location is the mitochondrion. It is found in the cytoplasm. The protein resides in the cytosol. The catalysed reaction is 4 Fe(2+) + O2 + 4 H(+) = 4 Fe(3+) + 2 H2O. Its function is as follows. Functions as an activator of persulfide transfer to the scaffoding protein ISCU as component of the core iron-sulfur cluster (ISC) assembly complex and participates to the [2Fe-2S] cluster assembly. Accelerates sulfur transfer from NFS1 persulfide intermediate to ISCU and to small thiols such as L-cysteine and glutathione leading to persulfuration of these thiols and ultimately sulfide release. Binds ferrous ion and is released from FXN upon the addition of both L-cysteine and reduced FDX2 during [2Fe-2S] cluster assembly. The core iron-sulfur cluster (ISC) assembly complex is involved in the de novo synthesis of a [2Fe-2S] cluster, the first step of the mitochondrial iron-sulfur protein biogenesis. This process is initiated by the cysteine desulfurase complex (NFS1:LYRM4:NDUFAB1) that produces persulfide which is delivered on the scaffold protein ISCU in a FXN-dependent manner. Then this complex is stabilized by FDX2 which provides reducing equivalents to accomplish the [2Fe-2S] cluster assembly. Finally, the [2Fe-2S] cluster is transferred from ISCU to chaperone proteins, including HSCB, HSPA9 and GLRX5. May play a role in the protection against iron-catalyzed oxidative stress through its ability to catalyze the oxidation of Fe(2+) to Fe(3+); the oligomeric form but not the monomeric form has in vitro ferroxidase activity. May be able to store large amounts of iron in the form of a ferrihydrite mineral by oligomerization; however, the physiological relevance is unsure as reports are conflicting and the function has only been shown using heterologous overexpression systems. May function as an iron chaperone protein that protects the aconitase [4Fe-4S]2+ cluster from disassembly and promotes enzyme reactivation. May play a role as a high affinity iron binding partner for FECH that is capable of both delivering iron to ferrochelatase and mediating the terminal step in mitochondrial heme biosynthesis. Modulates the RNA-binding activity of ACO1. May be involved in the cytoplasmic iron-sulfur protein biogenesis. May contribute to oxidative stress resistance and overall cell survival. This Macaca fascicularis (Crab-eating macaque) protein is Frataxin, mitochondrial.